A 359-amino-acid chain; its full sequence is S-adenosylmethionine:tRNA ribosyltransferase-isomerase (359 aa).

This sequence belongs to the QueA family. In terms of assembly, monomer.

The protein resides in the cytoplasm. It carries out the reaction 7-aminomethyl-7-carbaguanosine(34) in tRNA + S-adenosyl-L-methionine = epoxyqueuosine(34) in tRNA + adenine + L-methionine + 2 H(+). Its pathway is tRNA modification; tRNA-queuosine biosynthesis. Functionally, transfers and isomerizes the ribose moiety from AdoMet to the 7-aminomethyl group of 7-deazaguanine (preQ1-tRNA) to give epoxyqueuosine (oQ-tRNA). This is S-adenosylmethionine:tRNA ribosyltransferase-isomerase from Ralstonia pickettii (strain 12J).